We begin with the raw amino-acid sequence, 143 residues long: Nucleoside diphosphate kinase (143 aa).

ATP is bound by residues K11, F59, R87, T93, R104, and N114. H117 functions as the Pros-phosphohistidine intermediate in the catalytic mechanism.

This sequence belongs to the NDK family. In terms of assembly, homotetramer. It depends on Mg(2+) as a cofactor.

The protein resides in the cytoplasm. The enzyme catalyses a 2'-deoxyribonucleoside 5'-diphosphate + ATP = a 2'-deoxyribonucleoside 5'-triphosphate + ADP. The catalysed reaction is a ribonucleoside 5'-diphosphate + ATP = a ribonucleoside 5'-triphosphate + ADP. Functionally, major role in the synthesis of nucleoside triphosphates other than ATP. The ATP gamma phosphate is transferred to the NDP beta phosphate via a ping-pong mechanism, using a phosphorylated active-site intermediate. The chain is Nucleoside diphosphate kinase from Ectopseudomonas mendocina (strain ymp) (Pseudomonas mendocina).